The chain runs to 66 residues: Large ribosomal subunit protein bL35 (66 aa).

Residues 1-16 (MPKQKTHRASAKRFKR) are compositionally biased toward basic residues. Positions 1 to 21 (MPKQKTHRASAKRFKRTGSGG) are disordered.

It belongs to the bacterial ribosomal protein bL35 family.

This Streptococcus agalactiae serotype Ia (strain ATCC 27591 / A909 / CDC SS700) protein is Large ribosomal subunit protein bL35.